A 929-amino-acid chain; its full sequence is ATP-dependent RNA helicase DDX42 (929 aa).

K5 is subject to N6-acetyllysine. Position 12 is an omega-N-methylarginine (R12). Disordered regions lie at residues 25–119 and 182–203; these read KKEE…LEAF and EYDSDGNPIAPSKKIIDPLPPI. Residues 35-52 are compositionally biased toward low complexity; that stretch reads SHSAFGAASSSSGFGKSA. The residue at position 58 (S58) is a Phosphoserine. The segment covering 70–84 has biased composition (acidic residues); it reads DEENAYFEDEEEDSS. S96, S104, S109, and S111 each carry phosphoserine. Residues 116 to 157 are a coiled coil; that stretch reads LEAFMAEVEDQAARDMKRLEEKDKERKNVKGIRDDIEEEDDQ. At S185 the chain carries Phosphoserine. The Q motif motif lies at 253–281; sequence SSFAHFGFDEQLMHQIRKSEYTQPTPIQC. Residues 284–459 enclose the Helicase ATP-binding domain; that stretch reads VPVALSGRDM…RDILIDPIRV (176 aa). 297–304 is an ATP binding site; it reads AKTGSGKT. The DEAD box signature appears at 407-410; sequence DEAD. A Helicase C-terminal domain is found at 487-632; sequence WLTRRLVEFT…HVSKELLDLA (146 aa). Disordered stretches follow at residues 662–682 and 723–929; these read ERPGLGSENSDRGNNNNVMSN and GTSS…RWDS. Positions 723–737 are enriched in low complexity; the sequence is GTSSAGASGWTSAGS. Composition is skewed to polar residues over residues 738–777 and 787–798; these read LNSVPTNSAQQGHNSPDNPMTSSTKNIPGFNNSGNISSAP and GVNNTASGNNSR. Residues 739–828 form a necessary for interaction with TP53BP2 region; it reads NSVPTNSAQQ…RHSHGDGGNR (90 aa). Over residues 821 to 911 the composition is skewed to basic and acidic residues; the sequence is SHGDGGNRHG…KVDSKTDKTP (91 aa). K894 participates in a covalent cross-link: Glycyl lysine isopeptide (Lys-Gly) (interchain with G-Cter in SUMO2).

Belongs to the DEAD box helicase family. DDX42 subfamily. As to quaternary structure, transient component of the SF3B subcomplex of the 17S U2 SnRNP complex. Interacts (via the C-terminus) with TP53BP2; the interaction is not inhibitied by TP53BP2 ubiquitination and is independent of p53/TP53.

It localises to the cytoplasm. Its subcellular location is the nucleus. It carries out the reaction ATP + H2O = ADP + phosphate + H(+). In terms of biological role, ATP-dependent RNA helicase that binds to partially double-stranded RNAs (dsRNAs) in order to unwind RNA secondary structures. Unwinding is promoted in the presence of single-strand binding proteins. Also mediates RNA duplex formation thereby displacing the single-strand RNA binding protein. ATP and ADP modulate its activity: ATP binding and hydrolysis by DDX42 triggers RNA strand separation, whereas the ADP-bound form of the protein triggers annealing of complementary RNA strands. Required for assembly of the 17S U2 SnRNP complex of the spliceosome, a large ribonucleoprotein complex that removes introns from transcribed pre-mRNAs: DDX42 associates transiently with the SF3B subcomplex of the 17S U2 SnRNP complex and is released after fulfilling its role in the assembly of 17S U2 SnRNP. Involved in the survival of cells by interacting with TP53BP2 and thereby counteracting the apoptosis-stimulating activity of TP53BP2. Relocalizes TP53BP2 to the cytoplasm. The chain is ATP-dependent RNA helicase DDX42 (Ddx42) from Mus musculus (Mouse).